The sequence spans 202 residues: NADH dehydrogenase [ubiquinone] iron-sulfur protein 7, mitochondrial (202 aa).

The N-terminal 56 residues, 1–56, are a transit peptide targeting the mitochondrion; sequence MLRRTSFNFTGRAMISRGSPEWSHRLDLKKGKKTTMMHKLGTSKPNNALQYAQMTL. Residues cysteine 77, cysteine 78, cysteine 142, and cysteine 172 each contribute to the [4Fe-4S] cluster site.

Belongs to the complex I 20 kDa subunit family. Complex I is composed of 45 different subunits This is a component of the iron-sulfur (IP) fragment of the enzyme. [4Fe-4S] cluster serves as cofactor.

It localises to the mitochondrion. It carries out the reaction a ubiquinone + NADH + 5 H(+)(in) = a ubiquinol + NAD(+) + 4 H(+)(out). Functionally, core subunit of the mitochondrial membrane respiratory chain NADH dehydrogenase (Complex I) that is believed to belong to the minimal assembly required for catalysis. Complex I functions in the transfer of electrons from NADH to the respiratory chain. The immediate electron acceptor for the enzyme is believed to be ubiquinone. This Trypanosoma brucei brucei protein is NADH dehydrogenase [ubiquinone] iron-sulfur protein 7, mitochondrial (NDHK).